The sequence spans 598 residues: NADH-quinone oxidoreductase subunit C/D (598 aa).

Residues 1-190 (MSIFTQEVSA…EAFSLDDERL (190 aa)) are NADH dehydrogenase I subunit C. Residues 214-598 (DYLFLNLGPN…IDFVMADVDR (385 aa)) form an NADH dehydrogenase I subunit D region.

In the N-terminal section; belongs to the complex I 30 kDa subunit family. It in the C-terminal section; belongs to the complex I 49 kDa subunit family. In terms of assembly, NDH-1 is composed of 13 different subunits. Subunits NuoB, CD, E, F, and G constitute the peripheral sector of the complex.

The protein resides in the cell inner membrane. The enzyme catalyses a quinone + NADH + 5 H(+)(in) = a quinol + NAD(+) + 4 H(+)(out). Functionally, NDH-1 shuttles electrons from NADH, via FMN and iron-sulfur (Fe-S) centers, to quinones in the respiratory chain. The immediate electron acceptor for the enzyme in this species is believed to be ubiquinone. Couples the redox reaction to proton translocation (for every two electrons transferred, four hydrogen ions are translocated across the cytoplasmic membrane), and thus conserves the redox energy in a proton gradient. The protein is NADH-quinone oxidoreductase subunit C/D of Shewanella woodyi (strain ATCC 51908 / MS32).